Reading from the N-terminus, the 1235-residue chain is Receptor-type adenylate cyclase ESAG 4 (1235 aa).

A disordered region spans residues methionine 1–histidine 20. Topologically, residues methionine 1 to alanine 32 are cytoplasmic. Residues methionine 33–leucine 53 traverse the membrane as a helical segment. The Extracellular portion of the chain corresponds to proline 54–serine 858. 8 N-linked (GlcNAc...) asparagine glycosylation sites follow: asparagine 63, asparagine 90, asparagine 97, asparagine 362, asparagine 531, asparagine 566, asparagine 705, and asparagine 830. Residues leucine 859–valine 879 traverse the membrane as a helical segment. At proline 880–leucine 1235 the chain is on the cytoplasmic side. Residues threonine 900 to glutamate 1054 enclose the Guanylate cyclase domain. Mg(2+) contacts are provided by aspartate 905 and aspartate 948.

It belongs to the adenylyl cyclase class-3 family. The cofactor is Mg(2+).

It is found in the membrane. It catalyses the reaction ATP = 3',5'-cyclic AMP + diphosphate. Functionally, could act as a receptor for an unknown ligand. The chain is Receptor-type adenylate cyclase ESAG 4 (ESAG4) from Trypanosoma brucei brucei.